A 474-amino-acid polypeptide reads, in one-letter code: UDP-glycosyltransferase 71E1 (474 aa).

UDP-alpha-D-glucose-binding positions include serine 275, 341-342 (WA), 359-367 (HCGWNSTLE), and 381-384 (YAEQ).

This sequence belongs to the UDP-glycosyltransferase family.

Functionally, may glycosylate diterpenes or flavonols in leaves. The polypeptide is UDP-glycosyltransferase 71E1 (Stevia rebaudiana (Stevia)).